Reading from the N-terminus, the 95-residue chain is Acylphosphatase (95 aa).

Residues 5-93 (RAHLYIKGKV…GEFQDFRILP (89 aa)) enclose the Acylphosphatase-like domain. Catalysis depends on residues arginine 20 and asparagine 38.

This sequence belongs to the acylphosphatase family.

The catalysed reaction is an acyl phosphate + H2O = a carboxylate + phosphate + H(+). In Pyrobaculum islandicum (strain DSM 4184 / JCM 9189 / GEO3), this protein is Acylphosphatase (acyP).